Reading from the N-terminus, the 304-residue chain is Nod factor export ATP-binding protein I (304 aa).

The ABC transporter domain occupies 6-236 (IEFDKVKKSY…EIGCDVIEIF (231 aa)). 38–45 (GPNGAGKT) serves as a coordination point for ATP.

It belongs to the ABC transporter superfamily. Lipooligosaccharide exporter (TC 3.A.1.102) family. The complex is composed of two ATP-binding proteins (NodI) and two transmembrane proteins (NodJ).

It localises to the cell inner membrane. Part of the ABC transporter complex NodIJ involved in the export of the nodulation factors (Nod factors), the bacterial signal molecules that induce symbiosis and subsequent nodulation induction. Nod factors are LCO (lipo-chitin oligosaccharide), a modified beta-1,4-linked N-acetylglucosamine oligosaccharide. This subunit is responsible for energy coupling to the transport system. The sequence is that of Nod factor export ATP-binding protein I from Paraburkholderia xenovorans (strain LB400).